Reading from the N-terminus, the 342-residue chain is 4-hydroxy-3-methylbut-2-enyl diphosphate reductase (342 aa).

Cysteine 47 contacts [4Fe-4S] cluster. Positions 78 and 111 each coordinate (2E)-4-hydroxy-3-methylbut-2-enyl diphosphate. Residues histidine 78 and histidine 111 each coordinate dimethylallyl diphosphate. The isopentenyl diphosphate site is built by histidine 78 and histidine 111. Cysteine 133 is a [4Fe-4S] cluster binding site. Histidine 161 serves as a coordination point for (2E)-4-hydroxy-3-methylbut-2-enyl diphosphate. Histidine 161 serves as a coordination point for dimethylallyl diphosphate. Histidine 161 contributes to the isopentenyl diphosphate binding site. Glutamate 163 functions as the Proton donor in the catalytic mechanism. Residue threonine 201 coordinates (2E)-4-hydroxy-3-methylbut-2-enyl diphosphate. Position 231 (cysteine 231) interacts with [4Fe-4S] cluster. Serine 259, serine 260, asparagine 261, and serine 303 together coordinate (2E)-4-hydroxy-3-methylbut-2-enyl diphosphate. Dimethylallyl diphosphate is bound by residues serine 259, serine 260, asparagine 261, and serine 303. 4 residues coordinate isopentenyl diphosphate: serine 259, serine 260, asparagine 261, and serine 303.

This sequence belongs to the IspH family. [4Fe-4S] cluster serves as cofactor.

The enzyme catalyses isopentenyl diphosphate + 2 oxidized [2Fe-2S]-[ferredoxin] + H2O = (2E)-4-hydroxy-3-methylbut-2-enyl diphosphate + 2 reduced [2Fe-2S]-[ferredoxin] + 2 H(+). The catalysed reaction is dimethylallyl diphosphate + 2 oxidized [2Fe-2S]-[ferredoxin] + H2O = (2E)-4-hydroxy-3-methylbut-2-enyl diphosphate + 2 reduced [2Fe-2S]-[ferredoxin] + 2 H(+). Its pathway is isoprenoid biosynthesis; dimethylallyl diphosphate biosynthesis; dimethylallyl diphosphate from (2E)-4-hydroxy-3-methylbutenyl diphosphate: step 1/1. It functions in the pathway isoprenoid biosynthesis; isopentenyl diphosphate biosynthesis via DXP pathway; isopentenyl diphosphate from 1-deoxy-D-xylulose 5-phosphate: step 6/6. Catalyzes the conversion of 1-hydroxy-2-methyl-2-(E)-butenyl 4-diphosphate (HMBPP) into a mixture of isopentenyl diphosphate (IPP) and dimethylallyl diphosphate (DMAPP). Acts in the terminal step of the DOXP/MEP pathway for isoprenoid precursor biosynthesis. The protein is 4-hydroxy-3-methylbut-2-enyl diphosphate reductase of Anaplasma marginale (strain Florida).